The following is a 458-amino-acid chain: MKLQDNLKSIKKELERIKVENWSKENIDKNTYRYIRLFDIDDSLMNQKICFFGWVKSSRSSSKISFIELISQFKIIKCVIPTKVKLTDHTTLKVWGIMKPNNGNDEHQFEIDVQAYEVYGGYQAPSFPLNIHSDKDTLLDLAHLGLRMPHRILFLQAQNELLKALRKFYWNNNYTEITPPTLVQTQVEGGATLFKLNYYDQPAYLTQSSQLYLETVAPVVGKAFCIMPSYRAEKSKTSRHLSEFTHVEAELVDIQFDELMDQIEQLIRSTINEFYKNILPEIKKIDNDFQPVVLSDKQFKKITYEDAIHFLIAQNHKKTDNTDYQLGDDISDASEKFLLETYGENQPIFLIRFPTDHKPFYVAKDQYGTQTCDLLFPGIGEIVGGSMRETNYNNLLDGFKRENIDHEPYSWYLDMAKFGPSPHGGYGLGFERLLMCLMKYKSVDQSTLYCRKPSRCTP.

This sequence belongs to the class-II aminoacyl-tRNA synthetase family.

The protein resides in the cytoplasm. It catalyses the reaction tRNA(Asn) + L-asparagine + ATP = L-asparaginyl-tRNA(Asn) + AMP + diphosphate + H(+). The polypeptide is Probable asparagine--tRNA ligase, cytoplasmic (Enterocytozoon bieneusi (strain H348) (Microsporidian parasite)).